The primary structure comprises 67 residues: Large ribosomal subunit protein bL35 (67 aa).

Belongs to the bacterial ribosomal protein bL35 family.

This Rickettsia prowazekii (strain Madrid E) protein is Large ribosomal subunit protein bL35.